The sequence spans 284 residues: Cysteine-rich repeat secretory protein 8 (284 aa).

An N-terminal signal peptide occupies residues 1-27 (MATFIRFTAPLFCFFFLFSLFSHQTMS). Gnk2-homologous domains lie at 32–136 (MATF…NVSF) and 151–259 (SLAT…TTGL).

The protein belongs to the cysteine-rich repeat secretory protein family.

Its subcellular location is the secreted. This Arabidopsis thaliana (Mouse-ear cress) protein is Cysteine-rich repeat secretory protein 8 (CRRSP8).